Here is a 111-residue protein sequence, read N- to C-terminus: Small ribosomal subunit protein uS10 (111 aa).

This sequence belongs to the universal ribosomal protein uS10 family. As to quaternary structure, part of the 30S ribosomal subunit.

Its function is as follows. Involved in the binding of tRNA to the ribosomes. The sequence is that of Small ribosomal subunit protein uS10 from Xanthomonas euvesicatoria pv. vesicatoria (strain 85-10) (Xanthomonas campestris pv. vesicatoria).